A 244-amino-acid polypeptide reads, in one-letter code: 23S rRNA (guanosine-2'-O-)-methyltransferase RlmB (244 aa).

Residues G196, I216, and L225 each contribute to the S-adenosyl-L-methionine site.

It belongs to the class IV-like SAM-binding methyltransferase superfamily. RNA methyltransferase TrmH family. RlmB subfamily. As to quaternary structure, homodimer.

The protein localises to the cytoplasm. It carries out the reaction guanosine(2251) in 23S rRNA + S-adenosyl-L-methionine = 2'-O-methylguanosine(2251) in 23S rRNA + S-adenosyl-L-homocysteine + H(+). Its function is as follows. Specifically methylates the ribose of guanosine 2251 in 23S rRNA. This is 23S rRNA (guanosine-2'-O-)-methyltransferase RlmB from Pectobacterium atrosepticum (strain SCRI 1043 / ATCC BAA-672) (Erwinia carotovora subsp. atroseptica).